Here is a 506-residue protein sequence, read N- to C-terminus: GMP synthase [glutamine-hydrolyzing] (506 aa).

The region spanning 4 to 192 (KLIILDFGSQ…FLDICGMKRD (189 aa)) is the Glutamine amidotransferase type-1 domain. Cys-79 serves as the catalytic Nucleophile. Active-site residues include His-167 and Glu-169. In terms of domain architecture, GMPS ATP-PPase spans 193–381 (WTPASFIEAT…LGMMPHLIHR (189 aa)). Residue 220–226 (SGGVDSS) coordinates ATP.

As to quaternary structure, homodimer.

The enzyme catalyses XMP + L-glutamine + ATP + H2O = GMP + L-glutamate + AMP + diphosphate + 2 H(+). Its pathway is purine metabolism; GMP biosynthesis; GMP from XMP (L-Gln route): step 1/1. Catalyzes the synthesis of GMP from XMP. This chain is GMP synthase [glutamine-hydrolyzing], found in Porphyromonas gingivalis (strain ATCC BAA-308 / W83).